The following is a 201-amino-acid chain: Holliday junction branch migration complex subunit RuvA (201 aa).

Residues 1–64 are domain I; the sequence is MIGFIRGLLV…EDAHSLFGFG (64 aa). The segment at 65-143 is domain II; that stretch reads TEAERGLFRS…IGVPSLAPAS (79 aa). Residues 144–153 are flexible linker; it reads FAGGAAPLPA. The interval 153 to 201 is domain III; sequence AADPADEAVSALIALGFKPQEANTLVARQAAEGRSAEDLIRAALQSAVR.

The protein belongs to the RuvA family. In terms of assembly, homotetramer. Forms an RuvA(8)-RuvB(12)-Holliday junction (HJ) complex. HJ DNA is sandwiched between 2 RuvA tetramers; dsDNA enters through RuvA and exits via RuvB. An RuvB hexamer assembles on each DNA strand where it exits the tetramer. Each RuvB hexamer is contacted by two RuvA subunits (via domain III) on 2 adjacent RuvB subunits; this complex drives branch migration. In the full resolvosome a probable DNA-RuvA(4)-RuvB(12)-RuvC(2) complex forms which resolves the HJ.

It is found in the cytoplasm. Functionally, the RuvA-RuvB-RuvC complex processes Holliday junction (HJ) DNA during genetic recombination and DNA repair, while the RuvA-RuvB complex plays an important role in the rescue of blocked DNA replication forks via replication fork reversal (RFR). RuvA specifically binds to HJ cruciform DNA, conferring on it an open structure. The RuvB hexamer acts as an ATP-dependent pump, pulling dsDNA into and through the RuvAB complex. HJ branch migration allows RuvC to scan DNA until it finds its consensus sequence, where it cleaves and resolves the cruciform DNA. This is Holliday junction branch migration complex subunit RuvA from Methylococcus capsulatus (strain ATCC 33009 / NCIMB 11132 / Bath).